The primary structure comprises 148 residues: Ribonuclease H (148 aa).

Positions 3-144 (DKEQVVIYTD…ADQLANRGVA (142 aa)) constitute an RNase H type-1 domain. The Mg(2+) site is built by aspartate 12, glutamate 50, aspartate 72, and aspartate 136. Residues 125 to 148 (GHTGDPGNERADQLANRGVAELPR) are disordered.

It belongs to the RNase H family. As to quaternary structure, monomer. Mg(2+) is required as a cofactor.

The protein localises to the cytoplasm. It catalyses the reaction Endonucleolytic cleavage to 5'-phosphomonoester.. Functionally, endonuclease that specifically degrades the RNA of RNA-DNA hybrids. This Pseudomonas aeruginosa (strain LESB58) protein is Ribonuclease H.